A 110-amino-acid chain; its full sequence is Iron-sulfur cluster assembly protein CyaY (110 aa).

The protein belongs to the frataxin family.

Involved in iron-sulfur (Fe-S) cluster assembly. May act as a regulator of Fe-S biogenesis. This chain is Iron-sulfur cluster assembly protein CyaY, found in Pseudomonas fluorescens (strain ATCC BAA-477 / NRRL B-23932 / Pf-5).